Reading from the N-terminus, the 681-residue chain is Glutamine--fructose-6-phosphate aminotransferase [isomerizing] 1 (681 aa).

Cysteine 2 acts as the For GATase activity in catalysis. Residues 2 to 287 enclose the Glutamine amidotransferase type-2 domain; sequence CGIFAYLNYH…DDDVAAVVDG (286 aa). Serine 103 and serine 243 each carry phosphoserine. The segment at 295-662 is isomerase; sequence KRTARDHPGR…LQLLAFHLAV (368 aa). 2 consecutive SIS domains span residues 359-498 and 530-671; these read HIKE…DRIS and LATE…VDFP. Substrate-binding positions include 376–377, 421–423, threonine 426, and histidine 577; these read TS and SQS.

In terms of assembly, homotetramer, may also exist as homodimers.

It catalyses the reaction D-fructose 6-phosphate + L-glutamine = D-glucosamine 6-phosphate + L-glutamate. It participates in nucleotide-sugar biosynthesis; UDP-N-acetyl-alpha-D-glucosamine biosynthesis; alpha-D-glucosamine 6-phosphate from D-fructose 6-phosphate: step 1/1. With respect to regulation, inhibited by 4,4'-dithiodipyridine. In terms of biological role, controls the flux of glucose into the hexosamine pathway. Most likely involved in regulating the availability of precursors for N- and O-linked glycosylation of proteins. Regulates the circadian expression of clock genes BMAL1 and CRY1. Has a role in fine tuning the metabolic fluctuations of cytosolic UDP-GlcNAc and its effects on hyaluronan synthesis that occur during tissue remodeling. In Rattus norvegicus (Rat), this protein is Glutamine--fructose-6-phosphate aminotransferase [isomerizing] 1 (Gfpt1).